The sequence spans 209 residues: ATP phosphoribosyltransferase (209 aa).

Belongs to the ATP phosphoribosyltransferase family. Short subfamily. As to quaternary structure, heteromultimer composed of HisG and HisZ subunits.

It localises to the cytoplasm. The catalysed reaction is 1-(5-phospho-beta-D-ribosyl)-ATP + diphosphate = 5-phospho-alpha-D-ribose 1-diphosphate + ATP. Its pathway is amino-acid biosynthesis; L-histidine biosynthesis; L-histidine from 5-phospho-alpha-D-ribose 1-diphosphate: step 1/9. Catalyzes the condensation of ATP and 5-phosphoribose 1-diphosphate to form N'-(5'-phosphoribosyl)-ATP (PR-ATP). Has a crucial role in the pathway because the rate of histidine biosynthesis seems to be controlled primarily by regulation of HisG enzymatic activity. This Alkaliphilus metalliredigens (strain QYMF) protein is ATP phosphoribosyltransferase.